Consider the following 538-residue polypeptide: CWF19-like protein 1 (538 aa).

Residues 298 to 324 (QGRKRSSTGRDSKSSPHPKQPRKPPQP) are disordered.

The protein belongs to the CWF19 family. As to expression, expressed in many brain regions, including cerebellum, thalamus and occipital, parietal and temporal lobes (at protein level). Also expressed in the spinal cord (at protein level).

The sequence is that of CWF19-like protein 1 (CWF19L1) from Homo sapiens (Human).